The chain runs to 1364 residues: Collagen alpha-2(I) chain (1364 aa).

The first 22 residues, 1-22, serve as a signal peptide directing secretion; that stretch reads MLSFVDTRTLLLLAVTSCLATC. Q23 is subject to Pyrrolidone carboxylic acid. A propeptide spans 23–79 (N-terminal propeptide); that stretch reads QSLQEATARKGPSGDRGPRGERGPPGPPGRDGDDGIPGPPGPPGPPGPPGLGGNFAA. Residues 26-1128 form a disordered region; the sequence is QEATARKGPS…QPRSPTSLRP (1103 aa). The segment covering 34-44 has biased composition (basic and acidic residues); it reads PSGDRGPRGER. Over residues 59–71 the composition is skewed to pro residues; that stretch reads PGPPGPPGPPGPP. Q80 bears the Pyrrolidone carboxylic acid mark. Allysine is present on K84. A compositionally biased stretch (low complexity) spans 93-130; that stretch reads LMGPRGPPGASGAPGPQGFQGPPGEPGEPGQTGPAGAR. P100, P106, P115, P118, P121, P133, P136, P145, P151, P166, P169, and P172 each carry 4-hydroxyproline. Residues 139 to 153 are compositionally biased toward basic and acidic residues; it reads AGEDGHPGKPGRPGE. A 5-hydroxylysine; alternate modification is found at K175. O-linked (Gal...) hydroxylysine; alternate glycosylation occurs at K175. 4-hydroxyproline is present on residues P190 and P193. K196 carries the post-translational modification 5-hydroxylysine. Residues P199, P202, P208, P217, P226, P253, P256, and P259 each carry the 4-hydroxyproline modification. A compositionally biased stretch (low complexity) spans 223–252; that stretch reads VGAPGPAGARGSDGSVGPVGPAGPIGSAGP. Position 262 is a 5-hydroxylysine (K262). A 4-hydroxyproline mark is found at P271, P286, P295, and P304. The span at 277–291 shows a compositional bias: low complexity; that stretch reads AGPRGEVGLPGLSGP. Residues 298–319 are compositionally biased toward low complexity; the sequence is PGANGLPGAKGAAGLPGVAGAP. Position 307 is a 5-hydroxylysine (K307). Residues P313, P319, P322, P328, and P346 each carry the 4-hydroxyproline modification. Residues 328–343 show a composition bias toward low complexity; sequence PGPVGAAGATGARGLV. At K352 the chain carries 5-hydroxylysine. P361, P367, P370, P391, P394, P400, P406, P439, and P442 each carry 4-hydroxyproline. A compositionally biased stretch (low complexity) spans 396-406; it reads LRGNPGSRGLP. Low complexity-rich tracts occupy residues 468 to 487 and 511 to 535; these read LPGIDGRPGPIGPAGARGEP and AGLAGARGAPGPDGNNGAQGPPGLQ. Positions 536–545 are enriched in gly residues; sequence GVQGGKGEQG. Low complexity-rich tracts occupy residues 592–609, 621–643, 666–688, and 715–735; these read PGESGAAGPTGPIGSRGP, EPGVVGAPGTAGPSGPSGLPGER, SPGRDGARGAPGAIGAPGPAGAN, and VGPAGPNGFAGPAGAAGQPGA. The span at 736 to 745 shows a compositional bias: basic and acidic residues; that stretch reads KGERGTKGPK. Residues 748–763 are compositionally biased toward low complexity; that stretch reads NGPVGPTGPVGAAGPS. Residues 773–782 show a composition bias toward gly residues; that stretch reads GSRGDGGPPG. Low complexity-rich tracts occupy residues 783 to 793, 861 to 874, 891 to 930, 948 to 961, and 978 to 999; these read ATGFPGAAGRT, PQGLLGAPGFLGLP, EPGPLGIAGPPGARGPPGNVGNPGVNGAPGEAGRDGNPGN, YPGNAGPVGAAGAP, and EPGPAGAVGPAGAVGPRGPSGP. The span at 1003–1014 shows a compositional bias: basic and acidic residues; that stretch reads RGDKGEPGDKGP. Pro residues predominate over residues 1087–1101; it reads AGPPGPPGPPGPPGP. Positions 1118–1364 are cleaved as a propeptide — C-terminal propeptide; that stretch reads DQPRSPTSLR…RLNIGPVCFK (247 aa). Residues 1131-1364 enclose the Fibrillar collagen NC1 domain; the sequence is YEVDATLKSL…RLNIGPVCFK (234 aa). 3 cysteine pairs are disulfide-bonded: C1161–C1193, C1201–C1362, and C1270–C1315. Ca(2+) contacts are provided by D1179, N1181, Q1182, C1184, and D1187. The N-linked (GlcNAc...) asparagine glycan is linked to N1265.

The protein belongs to the fibrillar collagen family. As to quaternary structure, trimers of one alpha 2(I) and two alpha 1(I) chains. Interacts (via C-terminus) with TMEM131 (via PapD-L domain); the interaction is direct and is involved in assembly and TRAPPIII ER-to-Golgi transport complex-dependent secretion of collagen. Prolines at the third position of the tripeptide repeating unit (G-X-Y) are hydroxylated in some or all of the chains. Forms the fibrils of tendon, ligaments and bones. In bones the fibrils are mineralized with calcium hydroxyapatite.

Its subcellular location is the secreted. The protein resides in the extracellular space. It localises to the extracellular matrix. Its function is as follows. Type I collagen is a member of group I collagen (fibrillar forming collagen). This is Collagen alpha-2(I) chain (COL1A2) from Bos taurus (Bovine).